We begin with the raw amino-acid sequence, 504 residues long: MATLRVDEIHKILRERIEQYNRKVGIENIGRVVQVGDGIARIIGLGEIMSGELVQFAEGTRGIALNLESKNVGIVLMGDGLMIQEGSFVKATGRIAQIPVSEAYLGRVVNALAKPIDGKGEIIASESRLIESPAPSIISRRSVYEPLQTGLIAIDSMIPIGRGQRELIIGDRQTGKTAVATDTILNQKGQGVICVYVAIGQRASSVAQVVTTFHEEGAMEYTIVVAEMADSPATLQYLAPYTGAALAEYFMYRERHTLIIYDDLSKQAQAYRQMSLLLRRPPGREAYPGDVFYLHSRLLERAAKLNSLLGEGSMTALPIVETQSGDVSAYIPTNVISITDGQIFLSADLFNAGIRPAINVGISVSRVGSAAQIKAMKQVAGKSKLELAQFAELQAFAQFASALDKTSQNQLARGRRLRELLKQSQANPLPVEEQIATIYTGTRGYLDSLEIEQVNKFLDELRKHLKDTKPQFQEIISSSKTFTEQAEILLKEAIQEQLERFSLQ.

G170–T177 is an ATP binding site.

It belongs to the ATPase alpha/beta chains family. F-type ATPases have 2 components, CF(1) - the catalytic core - and CF(0) - the membrane proton channel. CF(1) has five subunits: alpha(3), beta(3), gamma(1), delta(1), epsilon(1). CF(0) has four main subunits: a, b, b' and c.

The protein resides in the plastid. The protein localises to the chloroplast thylakoid membrane. It catalyses the reaction ATP + H2O + 4 H(+)(in) = ADP + phosphate + 5 H(+)(out). Its function is as follows. Produces ATP from ADP in the presence of a proton gradient across the membrane. The alpha chain is a regulatory subunit. The polypeptide is ATP synthase subunit alpha, chloroplastic (Hordeum vulgare (Barley)).